Consider the following 600-residue polypeptide: Zinc metalloproteinase-disintegrin-like stejnihagin-B (600 aa).

A signal peptide spans 1–20; the sequence is MIEVLLVTICLAVFPYQGSS. Residues 21-191 constitute a propeptide that is removed on maturation; the sequence is IILESGNVND…KASQLVVTAE (171 aa). At glutamine 192 the chain carries Pyrrolidone carboxylic acid. Residues 198 to 389 form the Peptidase M12B domain; the sequence is RYVKLAIVAD…YNPQCILNAL (192 aa). Asparagine 261 and asparagine 317 each carry an N-linked (GlcNAc...) asparagine glycan. Cystine bridges form between cysteine 306–cysteine 384, cysteine 346–cysteine 368, and cysteine 348–cysteine 351. Residue histidine 331 participates in Zn(2+) binding. The active site involves glutamate 332. Residues histidine 335 and histidine 341 each coordinate Zn(2+). The region spanning 397 to 483 is the Disintegrin domain; the sequence is PPVCGNELLE…DCPTDSFHRN (87 aa). Residues valine 399, asparagine 402, leucine 404, glutamate 406, glutamate 409, and aspartate 412 each coordinate Ca(2+). 14 disulfide bridges follow: cysteine 400/cysteine 429, cysteine 411/cysteine 424, cysteine 413/cysteine 419, cysteine 423/cysteine 446, cysteine 437/cysteine 443, cysteine 442/cysteine 468, cysteine 455/cysteine 475, cysteine 462/cysteine 494, cysteine 487/cysteine 499, cysteine 506/cysteine 556, cysteine 521/cysteine 565, cysteine 534/cysteine 544, cysteine 551/cysteine 587, and cysteine 581/cysteine 593. Asparagine 425 carries an N-linked (GlcNAc...) asparagine glycan. The short motif at 461–463 is the D/ECD-tripeptide element; that stretch reads ECD. N-linked (GlcNAc...) asparagine glycosylation occurs at asparagine 467. N-linked (GlcNAc...) asparagine glycosylation is present at asparagine 513.

This sequence belongs to the venom metalloproteinase (M12B) family. P-III subfamily. P-IIIa sub-subfamily. As to quaternary structure, monomer. It depends on Zn(2+) as a cofactor. As to expression, expressed by the venom gland.

The protein localises to the secreted. Its function is as follows. This metalloproteinase-disintegrin-like impairs hemostasis in the envenomed animal. The protein is Zinc metalloproteinase-disintegrin-like stejnihagin-B of Trimeresurus stejnegeri (Chinese green tree viper).